The sequence spans 940 residues: Bifunctional uridylyltransferase/uridylyl-removing enzyme (940 aa).

Residues 1 to 379 (MPRRLRPTRL…PGARPKRKAL (379 aa)) are uridylyltransferase. The uridylyl-removing stretch occupies residues 380–736 (DVEGFYEDGG…GQVRPGSNAA (357 aa)). Positions 496-618 (VDEHTLRAVG…VENPERLRLL (123 aa)) constitute an HD domain. ACT domains lie at 737–821 (EVVI…PRRG) and 848–929 (VVEA…AARP).

This sequence belongs to the GlnD family. Mg(2+) is required as a cofactor.

It carries out the reaction [protein-PII]-L-tyrosine + UTP = [protein-PII]-uridylyl-L-tyrosine + diphosphate. It catalyses the reaction [protein-PII]-uridylyl-L-tyrosine + H2O = [protein-PII]-L-tyrosine + UMP + H(+). Its activity is regulated as follows. Uridylyltransferase (UTase) activity is inhibited by glutamine, while glutamine activates uridylyl-removing (UR) activity. In terms of biological role, modifies, by uridylylation and deuridylylation, the PII regulatory proteins (GlnB and homologs), in response to the nitrogen status of the cell that GlnD senses through the glutamine level. Under low glutamine levels, catalyzes the conversion of the PII proteins and UTP to PII-UMP and PPi, while under higher glutamine levels, GlnD hydrolyzes PII-UMP to PII and UMP (deuridylylation). Thus, controls uridylylation state and activity of the PII proteins, and plays an important role in the regulation of nitrogen assimilation and metabolism. This chain is Bifunctional uridylyltransferase/uridylyl-removing enzyme, found in Caulobacter vibrioides (strain ATCC 19089 / CIP 103742 / CB 15) (Caulobacter crescentus).